Here is a 260-residue protein sequence, read N- to C-terminus: Ubiquinone/menaquinone biosynthesis C-methyltransferase UbiE (260 aa).

Residues Thr83, Asp104, and Asn132–Ala133 each bind S-adenosyl-L-methionine.

Belongs to the class I-like SAM-binding methyltransferase superfamily. MenG/UbiE family.

The enzyme catalyses a 2-demethylmenaquinol + S-adenosyl-L-methionine = a menaquinol + S-adenosyl-L-homocysteine + H(+). The catalysed reaction is a 2-methoxy-6-(all-trans-polyprenyl)benzene-1,4-diol + S-adenosyl-L-methionine = a 5-methoxy-2-methyl-3-(all-trans-polyprenyl)benzene-1,4-diol + S-adenosyl-L-homocysteine + H(+). Its pathway is quinol/quinone metabolism; menaquinone biosynthesis; menaquinol from 1,4-dihydroxy-2-naphthoate: step 2/2. The protein operates within cofactor biosynthesis; ubiquinone biosynthesis. Its function is as follows. Methyltransferase required for the conversion of demethylmenaquinol (DMKH2) to menaquinol (MKH2) and the conversion of 2-polyprenyl-6-methoxy-1,4-benzoquinol (DDMQH2) to 2-polyprenyl-3-methyl-6-methoxy-1,4-benzoquinol (DMQH2). The protein is Ubiquinone/menaquinone biosynthesis C-methyltransferase UbiE of Bartonella henselae (strain ATCC 49882 / DSM 28221 / CCUG 30454 / Houston 1) (Rochalimaea henselae).